The following is a 299-amino-acid chain: MSETTRLRIAIQKSGRLSKESQKLLKSCGVKFNVNEQRLIAHSDNMPIDLLRVRDDDIPGLVMDGVVDLGIIGENVLEEEQIERNSLGKPAECIKLRELDFGACRLSLAVPTEFNYQDASSLEGLRIATSYPNLLRRYMQEKGINYRDCMLKGSVEVAPRAGLSDGICDLVSTGATLEANGLYETEVIYRSMACIIQSTQSQPDDKQALINKILSRINGVVRAKESKYILLHAPTETLEQIVALLPGAENPTVLPLNDDTNRVAIHAVSTEDLFWDTMEQLTQLGASSILVMPIEKMMG.

This sequence belongs to the ATP phosphoribosyltransferase family. Long subfamily. Mg(2+) serves as cofactor.

It localises to the cytoplasm. It carries out the reaction 1-(5-phospho-beta-D-ribosyl)-ATP + diphosphate = 5-phospho-alpha-D-ribose 1-diphosphate + ATP. It functions in the pathway amino-acid biosynthesis; L-histidine biosynthesis; L-histidine from 5-phospho-alpha-D-ribose 1-diphosphate: step 1/9. Its activity is regulated as follows. Feedback inhibited by histidine. Catalyzes the condensation of ATP and 5-phosphoribose 1-diphosphate to form N'-(5'-phosphoribosyl)-ATP (PR-ATP). Has a crucial role in the pathway because the rate of histidine biosynthesis seems to be controlled primarily by regulation of HisG enzymatic activity. This chain is ATP phosphoribosyltransferase, found in Shewanella halifaxensis (strain HAW-EB4).